The sequence spans 208 residues: MTGKKRSASSSRWLQEHFSDKYVQQAQKKGLRSRAWFKLDEIQQSDKLFKPGMTVVDLGAAPGGWSQYVVTQIGGRGRIIACDLLPMDPIVGVDFLQGDFRDELVMKALLERVGDSKVQVVMSDMAPNMSGTPAVDIPRAMYLVELALEMCRDVLAPGGSFVVKVFQGEGFDEYLREIRSLFTKVKVRKPDSSRARSREVYIVATGRK.

Gly63, Trp65, Asp83, Asp99, and Asp124 together coordinate S-adenosyl-L-methionine. Lys164 acts as the Proton acceptor in catalysis.

This sequence belongs to the class I-like SAM-binding methyltransferase superfamily. RNA methyltransferase RlmE family.

Its subcellular location is the cytoplasm. It carries out the reaction uridine(2552) in 23S rRNA + S-adenosyl-L-methionine = 2'-O-methyluridine(2552) in 23S rRNA + S-adenosyl-L-homocysteine + H(+). Functionally, specifically methylates the uridine in position 2552 of 23S rRNA at the 2'-O position of the ribose in the fully assembled 50S ribosomal subunit. This is Ribosomal RNA large subunit methyltransferase E from Salmonella arizonae (strain ATCC BAA-731 / CDC346-86 / RSK2980).